We begin with the raw amino-acid sequence, 273 residues long: Small ribosomal subunit protein eS1 (273 aa).

Belongs to the eukaryotic ribosomal protein eS1 family. As to quaternary structure, component of the small ribosomal subunit. Mature ribosomes consist of a small (40S) and a large (60S) subunit. The 40S subunit contains about 33 different proteins and 1 molecule of RNA (18S). The 60S subunit contains about 49 different proteins and 3 molecules of RNA (25S, 5.8S and 5S).

The protein resides in the cytoplasm. This Dictyostelium discoideum (Social amoeba) protein is Small ribosomal subunit protein eS1 (rps3a).